Here is a 329-residue protein sequence, read N- to C-terminus: (12E)-labda-8(17),12,14-triene synthase (329 aa).

2 residues coordinate Mg(2+): aspartate 90 and glutamate 95. Positions 90–95 (DDMHGE) match the DDXXXE motif motif. Arginine 184 contacts substrate. 2 residues coordinate Mg(2+): asparagine 230 and serine 234. Positions 230-238 (NDLASYERE) match the NXXXSXXXE motif motif. Arginine 237 contacts substrate. Position 238 (glutamate 238) interacts with Mg(2+). 316 to 317 (RY) contributes to the substrate binding site.

Belongs to the terpene synthase family. Mg(2+) serves as cofactor.

The enzyme catalyses (+)-copalyl diphosphate = (12E)-labda-8(17),12,14-triene + diphosphate. In terms of biological role, involved in the biosynthesis of the mercapturic acid derivative diterpene cyslabdan A, a potentiator of the beta-lactam antibiotic imipenem. Catalyzes the conversion of (+)-copalyl diphosphate to yield labda-8(17),12(E),14-triene (biformene). The chain is (12E)-labda-8(17),12,14-triene synthase from Streptomyces cyslabdanicus.